We begin with the raw amino-acid sequence, 75 residues long: UPF0291 protein lmo1304 (75 aa).

Residues 56 to 75 are disordered; the sequence is DPNGKDVTPHKVKQLRKNKY. A compositionally biased stretch (basic residues) spans 65 to 75; the sequence is HKVKQLRKNKY.

Belongs to the UPF0291 family.

It localises to the cytoplasm. The sequence is that of UPF0291 protein lmo1304 from Listeria monocytogenes serovar 1/2a (strain ATCC BAA-679 / EGD-e).